We begin with the raw amino-acid sequence, 172 residues long: MDSQKSCIAVYPGTFDPLTNGHVSLVRRAAMIFGTVIVAVAGDSHKTPLFTLDERVAIAEQVFANDRRVLVEGFKGLLVNYVKSREANVILRGMRAVSDFEFEFQMALMNRKLDRTIETVFIMTDYKWLYISSTIVKEVAKHGGDIRGMVPEHVRERMLERFGPANGSGEGA.

Thr14 contributes to the substrate binding site. ATP contacts are provided by residues 14–15 (TF) and His22. Substrate contacts are provided by Lys46, Leu78, and Arg92. ATP-binding positions include 93-95 (GMR), Glu103, and 128-134 (WLYISST).

Belongs to the bacterial CoaD family. Homohexamer. The cofactor is Mg(2+).

It is found in the cytoplasm. It carries out the reaction (R)-4'-phosphopantetheine + ATP + H(+) = 3'-dephospho-CoA + diphosphate. The protein operates within cofactor biosynthesis; coenzyme A biosynthesis; CoA from (R)-pantothenate: step 4/5. Reversibly transfers an adenylyl group from ATP to 4'-phosphopantetheine, yielding dephospho-CoA (dPCoA) and pyrophosphate. This is Phosphopantetheine adenylyltransferase from Solidesulfovibrio magneticus (strain ATCC 700980 / DSM 13731 / RS-1) (Desulfovibrio magneticus).